We begin with the raw amino-acid sequence, 137 residues long: Large ribosomal subunit protein uL16 (137 aa).

Positions 1–16 are enriched in basic residues; that stretch reads MLQPKRTKFRKVHTGR. A disordered region spans residues 1 to 22; it reads MLQPKRTKFRKVHTGRNRGLAQ.

Belongs to the universal ribosomal protein uL16 family. As to quaternary structure, part of the 50S ribosomal subunit.

In terms of biological role, binds 23S rRNA and is also seen to make contacts with the A and possibly P site tRNAs. The protein is Large ribosomal subunit protein uL16 of Idiomarina loihiensis (strain ATCC BAA-735 / DSM 15497 / L2-TR).